The following is a 1258-amino-acid chain: Phosphatidylinositol 3,4,5-trisphosphate 5-phosphatase 2 (1258 aa).

Residues Trp-21–Val-117 enclose the SH2 domain. Residues Gly-119–Ser-132 show a composition bias toward basic and acidic residues. Positions Gly-119–Thr-180 are disordered. Ser-132 bears the Phosphoserine mark. Residues Ser-145 to Gly-155 are compositionally biased toward polar residues. Positions Pro-156 to Pro-166 are enriched in pro residues. Thr-165 is modified (phosphothreonine). A phosphoserine mark is found at Ser-241 and Ser-352. Tyr-886 is subject to Phosphotyrosine. Phosphoserine is present on Ser-890. Positions Gly-897–Asp-1118 are disordered. Pro residues predominate over residues Pro-938–Ala-950. The short motif at Pro-944–Arg-949 is the SH3-binding element. The segment covering Ala-951–Gly-965 has biased composition (basic and acidic residues). Thr-958 is modified (phosphothreonine). The NPXY motif motif lies at Asn-983–Tyr-986. Position 986 is a phosphotyrosine; by SRC (Tyr-986). Composition is skewed to pro residues over residues Leu-996–Ala-1007, Leu-1048–Pro-1059, and Gly-1087–Ser-1104. Ser-1131 is modified (phosphoserine). Residues Tyr-1135 and Tyr-1162 each carry the phosphotyrosine modification. An SAM domain is found at Leu-1196–Lys-1258. Position 1257 is a phosphoserine (Ser-1257).

This sequence belongs to the inositol 1,4,5-trisphosphate 5-phosphatase family. Interacts with tyrosine phosphorylated form of SHC1. Interacts with EGFR. Upon stimulation by the EGF signaling pathway, it forms a complex with SHC1 and EGFR. Interacts with cytoskeletal protein SORBS3/vinexin, promoting its localization to the periphery of cells. Forms a complex with filamin (FLNA or FLNB), actin, GPIb (GP1BA or GP1BB) that regulates cortical and submembraneous actin. Interacts with c-Met/MET, when c-Met/MET is phosphorylated on 'Tyr-1356'. Interacts with p130Cas/BCAR1. Interacts with CENTD3/ARAP3 via its SAM domain. Interacts with c-Cbl/CBL and CAP/SORBS1. Interacts with activated EPHA2 receptor. Interacts with receptor FCGR2A. Interacts with receptor FCGR2B. Interacts with tyrosine kinase ABL1. Interacts with tyrosine kinase TEC. Interacts with CSF1R. Interacts (via N-terminus) with SH3YL1 (via SH3 domain). Interacts with FCRL6 (tyrosine phosphorylated form). Interacts (via SH2 domain) with tyrosine phosphorylated KLRC1 (via ITIM). Interacts with NEDD9/HEF1. In terms of processing, tyrosine phosphorylated by the members of the SRC family after exposure to a diverse array of extracellular stimuli such as insulin, growth factors such as EGF or PDGF, chemokines, integrin ligands and hypertonic and oxidative stress. May be phosphorylated upon IgG receptor FCGR2B-binding. Phosphorylated at Tyr-986 following cell attachment and spreading. Phosphorylated at Tyr-1162 following EGF signaling pathway stimulation. Phosphorylated at Thr-958 in response to PDGF. In terms of tissue distribution, widely expressed, most prominently in skeletal muscle, heart and brain. Present in platelets. Expressed in transformed myeloid cells and in primary macrophages, but not in peripheral blood monocytes.

The protein localises to the cytoplasm. Its subcellular location is the cytosol. The protein resides in the cytoskeleton. It localises to the membrane. It is found in the cell projection. The protein localises to the filopodium. Its subcellular location is the lamellipodium. The protein resides in the basal cell membrane. It localises to the nucleus. It is found in the nucleus speckle. The protein localises to the spindle pole. The catalysed reaction is a 1,2-diacyl-sn-glycero-3-phospho-(1D-myo-inositol-3,4,5-trisphosphate) + H2O = a 1,2-diacyl-sn-glycero-3-phospho-(1D-myo-inositol-3,4-bisphosphate) + phosphate. It carries out the reaction 1,2-dioctanoyl-sn-glycero-3-phospho-(1D-myo-inositol-3,4,5-trisphosphate) + H2O = 1,2-dioctanoyl-sn-glycero-3-phospho-(1D-myo-inositol-3,4-bisphosphate) + phosphate. The enzyme catalyses 1,2-dihexadecanoyl-sn-glycero-3-phospho-(1D-myo-inositol-3,4,5-trisphosphate) + H2O = 1,2-dihexadecanoyl-sn-glycero-3-phospho-(1D-myo-inositol-3,4-bisphosphate) + phosphate. Activated upon translocation to the sites of synthesis of PtdIns(3,4,5)P3 in the membrane. Enzymatic activity is enhanced in the presence of phosphatidylserine. In terms of biological role, phosphatidylinositol (PtdIns) phosphatase that specifically hydrolyzes the 5-phosphate of phosphatidylinositol-3,4,5-trisphosphate (PtdIns(3,4,5)P3) to produce PtdIns(3,4)P2, thereby negatively regulating the PI3K (phosphoinositide 3-kinase) pathways. Required for correct mitotic spindle orientation and therefore progression of mitosis. Plays a central role in regulation of PI3K-dependent insulin signaling, although the precise molecular mechanisms and signaling pathways remain unclear. While overexpression reduces both insulin-stimulated MAP kinase and Akt activation, its absence does not affect insulin signaling or GLUT4 trafficking. Confers resistance to dietary obesity. May act by regulating AKT2, but not AKT1, phosphorylation at the plasma membrane. Part of a signaling pathway that regulates actin cytoskeleton remodeling. Required for the maintenance and dynamic remodeling of actin structures as well as in endocytosis, having a major impact on ligand-induced EGFR internalization and degradation. Participates in regulation of cortical and submembraneous actin by hydrolyzing PtdIns(3,4,5)P3 thereby regulating membrane ruffling. Regulates cell adhesion and cell spreading. Required for HGF-mediated lamellipodium formation, cell scattering and spreading. Acts as a negative regulator of EPHA2 receptor endocytosis by inhibiting via PI3K-dependent Rac1 activation. Acts as a regulator of neuritogenesis by regulating PtdIns(3,4,5)P3 level and is required to form an initial protrusive pattern, and later, maintain proper neurite outgrowth. Acts as a negative regulator of the FC-gamma-RIIA receptor (FCGR2A). Mediates signaling from the FC-gamma-RIIB receptor (FCGR2B), playing a central role in terminating signal transduction from activating immune/hematopoietic cell receptor systems. Involved in EGF signaling pathway. Upon stimulation by EGF, it is recruited by EGFR and dephosphorylates PtdIns(3,4,5)P3. Plays a negative role in regulating the PI3K-PKB pathway, possibly by inhibiting PKB activity. Down-regulates Fc-gamma-R-mediated phagocytosis in macrophages independently of INPP5D/SHIP1. In macrophages, down-regulates NF-kappa-B-dependent gene transcription by regulating macrophage colony-stimulating factor (M-CSF)-induced signaling. Plays a role in the localization of AURKA and NEDD9/HEF1 to the basolateral membrane at interphase in polarized cysts, thereby mediates cell cycle homeostasis, cell polarization and cilia assembly. Additionally promotion of cilia growth is also facilitated by hydrolysis of (PtdIns(3,4,5)P3) to PtdIns(3,4)P2. Promotes formation of apical membrane-initiation sites during the initial stages of lumen formation via Rho family-induced actin filament organization and CTNNB1 localization to cell-cell contacts. May also hydrolyze PtdIns(1,3,4,5)P4, and could thus affect the levels of the higher inositol polyphosphates like InsP6. Involved in endochondral ossification. This is Phosphatidylinositol 3,4,5-trisphosphate 5-phosphatase 2 from Homo sapiens (Human).